The chain runs to 130 residues: Small ribosomal subunit protein uS8B (130 aa).

The protein belongs to the universal ribosomal protein uS8 family. As to quaternary structure, component of the small ribosomal subunit (SSU). Mature yeast ribosomes consist of a small (40S) and a large (60S) subunit. The 40S small subunit contains 1 molecule of ribosomal RNA (18S rRNA) and 33 different proteins (encoded by 57 genes). The large 60S subunit contains 3 rRNA molecules (25S, 5.8S and 5S rRNA) and 46 different proteins (encoded by 81 genes).

It is found in the cytoplasm. Its function is as follows. Component of the ribosome, a large ribonucleoprotein complex responsible for the synthesis of proteins in the cell. The small ribosomal subunit (SSU) binds messenger RNAs (mRNAs) and translates the encoded message by selecting cognate aminoacyl-transfer RNA (tRNA) molecules. The large subunit (LSU) contains the ribosomal catalytic site termed the peptidyl transferase center (PTC), which catalyzes the formation of peptide bonds, thereby polymerizing the amino acids delivered by tRNAs into a polypeptide chain. The nascent polypeptides leave the ribosome through a tunnel in the LSU and interact with protein factors that function in enzymatic processing, targeting, and the membrane insertion of nascent chains at the exit of the ribosomal tunnel. The polypeptide is Small ribosomal subunit protein uS8B (Saccharomyces cerevisiae (strain ATCC 204508 / S288c) (Baker's yeast)).